A 367-amino-acid chain; its full sequence is tRNA(Ile)-lysidine synthase, chloroplastic (367 aa).

64–69 lines the ATP pocket; the sequence is SGGQDS.

It belongs to the tRNA(Ile)-lysidine synthase family.

Its subcellular location is the plastid. The protein localises to the chloroplast. The enzyme catalyses cytidine(34) in tRNA(Ile2) + L-lysine + ATP = lysidine(34) in tRNA(Ile2) + AMP + diphosphate + H(+). Functionally, ligates lysine onto the cytidine present at position 34 of the AUA codon-specific tRNA(Ile) that contains the anticodon CAU, in an ATP-dependent manner. Cytidine is converted to lysidine, thus changing the amino acid specificity of the tRNA from methionine to isoleucine. This is tRNA(Ile)-lysidine synthase, chloroplastic from Nephroselmis olivacea (Green alga).